We begin with the raw amino-acid sequence, 343 residues long: Signaling lymphocytic activation molecule (343 aa).

Positions 1–24 are cleaved as a signal peptide; the sequence is MDPKGSLSWRILLFLSLAFELSYG. Residues 25–242 are Extracellular-facing; that stretch reads TGGGVMDCPV…KQESSSESSP (218 aa). Residues 29-138 form the Ig-like V-type domain; sequence VMDCPVILQK…VQQFCKQLKL (110 aa). Asn54, Asn58, Asn103, Asn126, Asn151, Asn158, Asn192, Asn211, and Asn226 each carry an N-linked (GlcNAc...) asparagine glycan. Positions 145–228 constitute an Ig-like C2-type domain; the sequence is PEIKVLNKTQ…SSISRTFNLS (84 aa). Intrachain disulfides connect Cys161/Cys232 and Cys167/Cys212. A helical transmembrane segment spans residues 243 to 265; that stretch reads WMQYTLVPLGVVIIFILVFTAII. Residues 266 to 343 lie on the Cytoplasmic side of the membrane; the sequence is MMKRQGKSNH…VYASVTLPES (78 aa). The ITSM 1 signature appears at 286-291; that stretch reads TIYAQV. 3 positions are modified to phosphotyrosine; by FYN: Tyr288, Tyr315, and Tyr335. The SH2-binding motif lies at 313 to 318; sequence TIYVAA. The tract at residues 320–343 is disordered; the sequence is EPAPESVQEPNPTTVYASVTLPES. Residues 327–343 show a composition bias toward polar residues; it reads QEPNPTTVYASVTLPES. Positions 333–338 match the ITSM 2 motif; the sequence is TVYASV.

In terms of assembly, interacts (via cytoplasmic domain) with SH2D1A and SH2D1B; SH2D1A mediates association with FYN; SH2D1A binds to phosphorylated and not phosphorylated ITSM 1. Interacts (via cytoplasmic domain phosphorylated on tyrosine residues) with INPP5D and PTPN11; presence of SH2D1A facilitates binding to INPP5D. Interacts with MAP4K1. Interacts with PIK3C3, BECN1 and UVRAG; indicative for an association with PI3K complex II (PI3KC3-C2). Post-translationally, phosphorylated on tyrosine residues by FYN.

The protein localises to the cell membrane. Functionally, self-ligand receptor of the signaling lymphocytic activation molecule (SLAM) family. SLAM receptors triggered by homo- or heterotypic cell-cell interactions are modulating the activation and differentiation of a wide variety of immune cells and thus are involved in the regulation and interconnection of both innate and adaptive immune response. Activities are controlled by presence or absence of small cytoplasmic adapter proteins, SH2D1A/SAP and/or SH2D1B/EAT-2. SLAMF1-induced signal-transduction events in T-lymphocytes are different from those in B-cells. Two modes of SLAMF1 signaling seem to exist: one depending on SH2D1A (and perhaps SH2D1B) and another in which protein-tyrosine phosphatase 2C (PTPN11)-dependent signal transduction operates. Initially it has been proposed that association with SH2D1A prevents binding to inhibitory effectors including INPP5D/SHIP1 and PTPN11/SHP-2. However, signaling is also regulated by SH2D1A which can simultaneously interact with and recruit FYN which subsequently phosphorylates and activates SLAMF1. Mediates IL-2-independent proliferation of activated T-cells during immune responses and induces IFN-gamma production. Downstreaming signaling involves INPP5D, DOK1 and DOK2 leading to inhibited IFN-gamma production in T-cells, and PRKCQ, BCL10 and NFKB1 leading to increased T-cell activation and Th2 cytokine production. Promotes T-cell receptor-induced IL-4 secretion by CD4(+) cells. Inhibits antigen receptor-mediated production of IFN-gamma, but not IL-2, in CD4(-)/CD8(-) T-cells. Required for IL-4 production by germinal centers T follicular helper (T(Fh))cells. May inhibit CD40-induced signal transduction in monocyte-derived dendritic cells. May play a role in allergic responses and may regulate allergen-induced Th2 cytokine and Th1 cytokine secretion. In conjunction with SLAMF6 controls the transition between positive selection and the subsequent expansion and differentiation of the thymocytic natural killer T (NKT) cell lineage. Involved in the peripheral differentiation of indifferent natural killer T (iNKT) cells toward a regulatory NKT2 type. In macrophages involved in down-regulation of IL-12, TNF-alpha and nitric oxide in response to lipopolysaccharide (LPS). In B-cells activates the ERK signaling pathway independently of SH2D1A but implicating both, SYK and INPP5D, and activates Akt signaling dependent on SYK and SH2D1A. In conjunction with CD84/SLAMF5 and SLAMF6 may be a negative regulator of the humoral immune response. In terms of biological role, (Microbial infection) Involved in innate immune response against Gram-negative bacteria in macrophages; probably recognizes OmpC and/or OmpF on the bacterial surface, regulates phagosome maturation and recruitment of the PI3K complex II (PI3KC3-C2) leading to accumulated of PdtIns(3)P and NOX2 activity in the phagosomes. This chain is Signaling lymphocytic activation molecule (Slamf1), found in Mus musculus (Mouse).